A 511-amino-acid chain; its full sequence is Probable eukaryotic translation initiation factor 4H (511 aa).

Disordered regions lie at residues 25–63 (SWAD…DRGS) and 154–511 (TIRV…EVKI). The span at 39–51 (AREESGSGLKRGD) shows a compositional bias: basic and acidic residues. Residues 86–162 (FTAFIGNLSF…RTIRVNVAEA (77 aa)) enclose the RRM domain. A compositionally biased stretch (polar residues) spans 179–196 (WRRSTPLASRESSSQPSR). 2 stretches are compositionally biased toward basic and acidic residues: residues 230–247 (VRRD…RDPG) and 261–270 (LAEKVDRDVP). Polar residues predominate over residues 285–318 (LADTEQTWSRGTKLRTPTTTSRQSSADSTPSSGA). The span at 331–349 (TAGSPSATANATPAAPASG) shows a compositional bias: low complexity. A Phosphoserine modification is found at S334. Composition is skewed to basic and acidic residues over residues 360–388 (AARE…EKQK) and 394–419 (KPVE…DKVA). Low complexity predominate over residues 420-434 (GKPTTAPATTTNTGA). Residues 438–448 (GSADRAKKDEQ) are compositionally biased toward basic and acidic residues. A compositionally biased stretch (polar residues) spans 451-467 (EQVQPSRKSSQTGATSE). Positions 502–511 (VTKGVEEVKI) are enriched in basic and acidic residues.

The protein localises to the cytoplasm. It localises to the P-body. Functionally, probable translation initiation factor. The chain is Probable eukaryotic translation initiation factor 4H from Cryptococcus neoformans var. grubii serotype A (strain H99 / ATCC 208821 / CBS 10515 / FGSC 9487) (Filobasidiella neoformans var. grubii).